We begin with the raw amino-acid sequence, 536 residues long: Bifunctional purine biosynthesis protein PurH (536 aa).

Positions 8 to 158 constitute an MGS-like domain; it reads IPAPDEVRIK…KNHAYVTIVT (151 aa).

Belongs to the PurH family.

It catalyses the reaction (6R)-10-formyltetrahydrofolate + 5-amino-1-(5-phospho-beta-D-ribosyl)imidazole-4-carboxamide = 5-formamido-1-(5-phospho-D-ribosyl)imidazole-4-carboxamide + (6S)-5,6,7,8-tetrahydrofolate. It carries out the reaction IMP + H2O = 5-formamido-1-(5-phospho-D-ribosyl)imidazole-4-carboxamide. It functions in the pathway purine metabolism; IMP biosynthesis via de novo pathway; 5-formamido-1-(5-phospho-D-ribosyl)imidazole-4-carboxamide from 5-amino-1-(5-phospho-D-ribosyl)imidazole-4-carboxamide (10-formyl THF route): step 1/1. The protein operates within purine metabolism; IMP biosynthesis via de novo pathway; IMP from 5-formamido-1-(5-phospho-D-ribosyl)imidazole-4-carboxamide: step 1/1. This chain is Bifunctional purine biosynthesis protein PurH, found in Rhizobium meliloti (strain 1021) (Ensifer meliloti).